A 356-amino-acid chain; its full sequence is UDP-N-acetylenolpyruvoylglucosamine reductase (356 aa).

Positions 19–227 (LGGPAARFCS…RDAVLSLRRS (209 aa)) constitute an FAD-binding PCMH-type domain. The active site involves Arg-167. Ser-244 acts as the Proton donor in catalysis. Glu-348 is a catalytic residue.

This sequence belongs to the MurB family. FAD is required as a cofactor.

The protein resides in the cytoplasm. It catalyses the reaction UDP-N-acetyl-alpha-D-muramate + NADP(+) = UDP-N-acetyl-3-O-(1-carboxyvinyl)-alpha-D-glucosamine + NADPH + H(+). It functions in the pathway cell wall biogenesis; peptidoglycan biosynthesis. In terms of biological role, cell wall formation. In Thermobifida fusca (strain YX), this protein is UDP-N-acetylenolpyruvoylglucosamine reductase.